The chain runs to 28 residues: Basic phospholipase A2 homolog BmatTX-II (28 aa).

Monomer. As to expression, expressed by the venom gland.

The protein localises to the secreted. Its function is as follows. Snake venom phospholipase A2 homolog that lacks enzymatic activity. Shows high myotoxic activity, neutrophil activation (demonstrated by activation induction of IL-1beta production), and slight cytotoxicity against Jurkat (leukemia T) and SK-BR-3 (breast adenocarcinoma) tumor cell lines. A model of myotoxic mechanism has been proposed: an apo Lys49-PLA2 is activated by the entrance of a hydrophobic molecule (e.g. fatty acid) at the hydrophobic channel of the protein leading to a reorientation of a monomer. This reorientation causes a transition between 'inactive' to 'active' states, causing alignment of C-terminal and membrane-docking sites (MDoS) side-by-side and putting the membrane-disruption sites (MDiS) in the same plane, exposed to solvent and in a symmetric position for both monomers. The MDoS region stabilizes the toxin on membrane by the interaction of charged residues with phospholipid head groups. Subsequently, the MDiS region destabilizes the membrane with penetration of hydrophobic residues. This insertion causes a disorganization of the membrane, allowing an uncontrolled influx of ions (i.e. calcium and sodium), and eventually triggering irreversible intracellular alterations and cell death. The sequence is that of Basic phospholipase A2 homolog BmatTX-II from Bothrops mattogrossensis (Pitviper).